Here is a 242-residue protein sequence, read N- to C-terminus: Biosynthetic peptidoglycan transglycosylase (242 aa).

The helical transmembrane segment at 19 to 39 (LLLACAVLWGGGVALFSIVPV) threads the bilayer.

The protein belongs to the glycosyltransferase 51 family.

The protein resides in the cell inner membrane. The enzyme catalyses [GlcNAc-(1-&gt;4)-Mur2Ac(oyl-L-Ala-gamma-D-Glu-L-Lys-D-Ala-D-Ala)](n)-di-trans,octa-cis-undecaprenyl diphosphate + beta-D-GlcNAc-(1-&gt;4)-Mur2Ac(oyl-L-Ala-gamma-D-Glu-L-Lys-D-Ala-D-Ala)-di-trans,octa-cis-undecaprenyl diphosphate = [GlcNAc-(1-&gt;4)-Mur2Ac(oyl-L-Ala-gamma-D-Glu-L-Lys-D-Ala-D-Ala)](n+1)-di-trans,octa-cis-undecaprenyl diphosphate + di-trans,octa-cis-undecaprenyl diphosphate + H(+). Its pathway is cell wall biogenesis; peptidoglycan biosynthesis. Its function is as follows. Peptidoglycan polymerase that catalyzes glycan chain elongation from lipid-linked precursors. The sequence is that of Biosynthetic peptidoglycan transglycosylase from Klebsiella oxytoca.